We begin with the raw amino-acid sequence, 335 residues long: Ubiquinol oxidase 1b, mitochondrial (335 aa).

The transit peptide at Met1–Met47 directs the protein to the mitochondrion. A helical membrane pass occupies residues Ala160–Leu180. Fe cation-binding residues include Glu164, Glu203, and His206. Residues Ala222–Ser242 form a helical membrane-spanning segment. Residues Glu254, Glu305, and His308 each coordinate Fe cation.

It belongs to the alternative oxidase family. Fe cation is required as a cofactor.

It is found in the mitochondrion inner membrane. The enzyme catalyses 2 a ubiquinol + O2 = 2 a ubiquinone + 2 H2O. Catalyzes the cyanide-resistant oxidation of ubiquinol and the reduction of molecular oxygen to water, but does not translocate protons and consequently is not linked to oxidative phosphorylation. May increase respiration when the cytochrome respiratory pathway is restricted, or in response to low temperatures. This Oryza sativa subsp. japonica (Rice) protein is Ubiquinol oxidase 1b, mitochondrial.